The chain runs to 668 residues: tRNA 5-methylaminomethyl-2-thiouridine biosynthesis bifunctional protein MnmC (668 aa).

Positions 1–245 (MKHYSIQPAN…KREMLCGVME (245 aa)) are tRNA (mnm(5)s(2)U34)-methyltransferase. The tract at residues 270–668 (IGGGIACALL…LLKGKAVKAG (399 aa)) is FAD-dependent cmnm(5)s(2)U34 oxidoreductase.

This sequence in the N-terminal section; belongs to the methyltransferase superfamily. tRNA (mnm(5)s(2)U34)-methyltransferase family. It in the C-terminal section; belongs to the DAO family. It depends on FAD as a cofactor.

The protein localises to the cytoplasm. The catalysed reaction is 5-aminomethyl-2-thiouridine(34) in tRNA + S-adenosyl-L-methionine = 5-methylaminomethyl-2-thiouridine(34) in tRNA + S-adenosyl-L-homocysteine + H(+). Its function is as follows. Catalyzes the last two steps in the biosynthesis of 5-methylaminomethyl-2-thiouridine (mnm(5)s(2)U) at the wobble position (U34) in tRNA. Catalyzes the FAD-dependent demodification of cmnm(5)s(2)U34 to nm(5)s(2)U34, followed by the transfer of a methyl group from S-adenosyl-L-methionine to nm(5)s(2)U34, to form mnm(5)s(2)U34. The chain is tRNA 5-methylaminomethyl-2-thiouridine biosynthesis bifunctional protein MnmC from Shigella boydii serotype 4 (strain Sb227).